A 350-amino-acid polypeptide reads, in one-letter code: Zona pellucida-binding protein 1 (350 aa).

The N-terminal stretch at 1 to 44 (MEALAPGRAPRGRRRAGASGSVLSPLSLAAVLLCALLRAPPAVG) is a signal peptide. Asn113, Asn186, and Asn339 each carry an N-linked (GlcNAc...) asparagine glycan.

Belongs to the zona pellucida-binding protein Sp38 family. N-glycosylated. Expressed in testis (at protein level). Expressed in male germ cells.

It localises to the cytoplasmic vesicle. The protein resides in the secretory vesicle. Its subcellular location is the acrosome. The protein localises to the acrosome membrane. It is found in the secreted. In terms of biological role, plays a role in acrosome compaction and sperm morphogenesis. Is implicated in sperm-oocyte interaction during fertilization. The sequence is that of Zona pellucida-binding protein 1 (Zpbp) from Mus musculus (Mouse).